Consider the following 122-residue polypeptide: Large ribosomal subunit protein uL14 (122 aa).

It belongs to the universal ribosomal protein uL14 family. As to quaternary structure, part of the 50S ribosomal subunit. Forms a cluster with proteins L3 and L19. In the 70S ribosome, L14 and L19 interact and together make contacts with the 16S rRNA in bridges B5 and B8.

Its function is as follows. Binds to 23S rRNA. Forms part of two intersubunit bridges in the 70S ribosome. This Trichormus variabilis (strain ATCC 29413 / PCC 7937) (Anabaena variabilis) protein is Large ribosomal subunit protein uL14.